The following is a 129-amino-acid chain: Large ribosomal subunit protein bL20 (129 aa).

This sequence belongs to the bacterial ribosomal protein bL20 family.

Functionally, binds directly to 23S ribosomal RNA and is necessary for the in vitro assembly process of the 50S ribosomal subunit. It is not involved in the protein synthesizing functions of that subunit. This chain is Large ribosomal subunit protein bL20, found in Mycobacteroides abscessus (strain ATCC 19977 / DSM 44196 / CCUG 20993 / CIP 104536 / JCM 13569 / NCTC 13031 / TMC 1543 / L948) (Mycobacterium abscessus).